The sequence spans 158 residues: 2-C-methyl-D-erythritol 2,4-cyclodiphosphate synthase (158 aa).

Positions 9 and 11 each coordinate a divalent metal cation. 4-CDP-2-C-methyl-D-erythritol 2-phosphate is bound by residues 9–11 (DVH) and 35–36 (HS). Position 43 (H43) interacts with a divalent metal cation. Residues 57–59 (DIG), 62–66 (FPDTD), 101–107 (AQAPKMA), 133–136 (TTTE), F140, and R143 contribute to the 4-CDP-2-C-methyl-D-erythritol 2-phosphate site.

The protein belongs to the IspF family. In terms of assembly, homotrimer. Requires a divalent metal cation as cofactor.

It catalyses the reaction 4-CDP-2-C-methyl-D-erythritol 2-phosphate = 2-C-methyl-D-erythritol 2,4-cyclic diphosphate + CMP. It participates in isoprenoid biosynthesis; isopentenyl diphosphate biosynthesis via DXP pathway; isopentenyl diphosphate from 1-deoxy-D-xylulose 5-phosphate: step 4/6. In terms of biological role, involved in the biosynthesis of isopentenyl diphosphate (IPP) and dimethylallyl diphosphate (DMAPP), two major building blocks of isoprenoid compounds. Catalyzes the conversion of 4-diphosphocytidyl-2-C-methyl-D-erythritol 2-phosphate (CDP-ME2P) to 2-C-methyl-D-erythritol 2,4-cyclodiphosphate (ME-CPP) with a corresponding release of cytidine 5-monophosphate (CMP). The polypeptide is 2-C-methyl-D-erythritol 2,4-cyclodiphosphate synthase (Vibrio cholerae serotype O1 (strain ATCC 39541 / Classical Ogawa 395 / O395)).